A 446-amino-acid polypeptide reads, in one-letter code: MSTEGGPPPPPPRPPPAPLRRACSPAPGALQAALMSPPPAATLESTSSSSSSSSASCASSSSNSVSASAGACKSAASSGGAGAGSGGTKKATSGLRRPEKPPYSYIALIVMAIQSSPSKRLTLSEIYQFLQARFPFFRGAYQGWKNSVRHNLSLNECFIKLPKGLGRPGKGHYWTIDPASEFMFEEGSFRRRPRGFRRKCQALKPMYHRVVSGLGFGASLLPQGFDFQAPPSAPLGCHGQGGYGGLDMMPAGYDTGAGAPGHAHPHHLHHHHVPHMSPNPGSTYMASCPVPAGPAGVGAAAGGGGGGGDYGPDSSSSPVPSSPAMASAIECHSPYTSPAAHWSSPGASPYLKQPPALTPSSNPAASAGLHPSMSSYSLEQSYLHQNAREDLSVGLPRYQHHSTPVCDRKDFVLNFNGISSFHPSASGSYYHHHHQSVCQDIKPCVM.

Pro residues predominate over residues 1-18 (MSTEGGPPPPPPRPPPAP). Residues 1–97 (MSTEGGPPPP…TKKATSGLRR (97 aa)) form a disordered region. Over residues 45-78 (STSSSSSSSSASCASSSSNSVSASAGACKSAASS) the composition is skewed to low complexity. The fork-head DNA-binding region spans 100-194 (KPPYSYIALI…EEGSFRRRPR (95 aa)). Disordered stretches follow at residues 257-278 (AGAP…HMSP), 304-325 (GGGG…SPAM), and 340-371 (AHWS…GLHP). A compositionally biased stretch (basic residues) spans 263–274 (AHPHHLHHHHVP). Residues 311–325 (GPDSSSSPVPSSPAM) show a composition bias toward low complexity.

In terms of assembly, interacts with the transcription factors TBP and TFIIB. In terms of tissue distribution, uniquely expressed in the bronchiolar epithelium and in type II pneumocytes.

Its subcellular location is the nucleus. Its function is as follows. Probable transcription activator for a number of lung-specific genes. Mediates up-regulation of the E3 ligase IRF2BPL and drives ubiquitination and degradation of CTNNB1. The sequence is that of Forkhead box protein F2 (Foxf2) from Mus musculus (Mouse).